Here is a 101-residue protein sequence, read N- to C-terminus: NADH-quinone oxidoreductase subunit K (101 aa).

3 helical membrane passes run 4–24, 30–50, and 61–81; these read LSHY…GIFL, IVLL…FIAF, and IFVF…LAIL.

This sequence belongs to the complex I subunit 4L family. In terms of assembly, NDH-1 is composed of 14 different subunits. Subunits NuoA, H, J, K, L, M, N constitute the membrane sector of the complex.

It is found in the cell inner membrane. The enzyme catalyses a quinone + NADH + 5 H(+)(in) = a quinol + NAD(+) + 4 H(+)(out). Its function is as follows. NDH-1 shuttles electrons from NADH, via FMN and iron-sulfur (Fe-S) centers, to quinones in the respiratory chain. The immediate electron acceptor for the enzyme in this species is believed to be ubiquinone. Couples the redox reaction to proton translocation (for every two electrons transferred, four hydrogen ions are translocated across the cytoplasmic membrane), and thus conserves the redox energy in a proton gradient. The protein is NADH-quinone oxidoreductase subunit K of Aromatoleum aromaticum (strain DSM 19018 / LMG 30748 / EbN1) (Azoarcus sp. (strain EbN1)).